A 178-amino-acid polypeptide reads, in one-letter code: uncharacterized protein (178 aa).

The next 5 membrane-spanning stretches (helical) occupy residues 13–33 (GIVL…FFMP), 48–68 (MLNA…LIMI), 80–100 (ILAA…YHSI), 115–135 (IYFF…PLAL), and 155–175 (WTMP…LMIS).

It is found in the cell membrane. This is an uncharacterized protein from Bacillus subtilis (strain 168).